The primary structure comprises 164 residues: SsrA-binding protein (164 aa).

Belongs to the SmpB family.

Its subcellular location is the cytoplasm. Functionally, required for rescue of stalled ribosomes mediated by trans-translation. Binds to transfer-messenger RNA (tmRNA), required for stable association of tmRNA with ribosomes. tmRNA and SmpB together mimic tRNA shape, replacing the anticodon stem-loop with SmpB. tmRNA is encoded by the ssrA gene; the 2 termini fold to resemble tRNA(Ala) and it encodes a 'tag peptide', a short internal open reading frame. During trans-translation Ala-aminoacylated tmRNA acts like a tRNA, entering the A-site of stalled ribosomes, displacing the stalled mRNA. The ribosome then switches to translate the ORF on the tmRNA; the nascent peptide is terminated with the 'tag peptide' encoded by the tmRNA and targeted for degradation. The ribosome is freed to recommence translation, which seems to be the essential function of trans-translation. The sequence is that of SsrA-binding protein from Corynebacterium efficiens (strain DSM 44549 / YS-314 / AJ 12310 / JCM 11189 / NBRC 100395).